The following is a 115-amino-acid chain: DNA-directed RNA polymerase II subunit RPB11-b1 (115 aa).

The protein belongs to the archaeal Rpo11/eukaryotic RPB11/RPC19 RNA polymerase subunit family. In terms of assembly, component of the RNA polymerase II (Pol II) complex consisting of 12 subunits. Ubiquitously expressed.

Its subcellular location is the nucleus. Its function is as follows. DNA-dependent RNA polymerase catalyzes the transcription of DNA into RNA using the four ribonucleoside triphosphates as substrates. Component of RNA polymerase II which synthesizes mRNA precursors and many functional non-coding RNAs. Pol II is the central component of the basal RNA polymerase II transcription machinery. It is composed of mobile elements that move relative to each other. RPB11 is part of the core element with the central large cleft. This chain is DNA-directed RNA polymerase II subunit RPB11-b1 (POLR2J2), found in Homo sapiens (Human).